The following is a 415-amino-acid chain: MLQKTVLLLALVAQVLMLENGLLRTPPMGWLAWERFRCNIDCVEDPKNCISERLFMEMADRLAQDGWRDLGYVYLNIDDCWIGGRDASGRLIPDPKRFPHGIAFLADYAHSLGLKLGIYEDMGKMTCMGYPGTTLDKVELDAETFAEWKVDMLKLDGCFSSSRERAEGYPKMAAALNATGRPIAFSCSWPAYEGGLPPKVNYTEVSRVCNLWRNYKDIQDSWKSVLSILDWFVRHQDVLQPVAGPGHWNDPDMLLIGNFGLSFDESRAQMALWTVLAAPLLMSTDLRTISPQNMDILQNPLMIKINQDPLGIQGRRILKSKSHIEVFKRYLSNQASALVFFSRRTDMPFRFHCSLLELNYPKGRVYEGQNVFTGDIFSGLQTEVNFTVIINPSGVVMWYLYPIKDLGISTMMSHW.

The N-terminal stretch at 1-17 (MLQKTVLLLALVAQVLM) is a signal peptide. Cystine bridges form between Cys-38–Cys-80, Cys-42–Cys-49, and Cys-127–Cys-158. Substrate contacts are provided by residues 78 to 79 (DD) and Lys-154. Asp-156 serves as the catalytic Nucleophile. The N-linked (GlcNAc...) asparagine glycan is linked to Asn-177. Cys-187 and Cys-209 are disulfide-bonded. Ser-188 serves as a coordination point for substrate. N-linked (GlcNAc...) asparagine glycosylation occurs at Asn-201. 2 residues coordinate substrate: Arg-213 and Asp-217. Asp-217 serves as the catalytic Proton donor. Residues Ser-322 and Ser-332 each carry the phosphoserine modification. Asn-385 carries an N-linked (GlcNAc...) asparagine glycan.

This sequence belongs to the glycosyl hydrolase 27 family. Homodimer.

The protein localises to the lysosome. The enzyme catalyses Cleavage of non-reducing alpha-(1-&gt;3)-N-acetylgalactosamine residues from human blood group A and AB mucin glycoproteins, Forssman hapten and blood group A lacto series glycolipids.. It catalyses the reaction a neolactoside IV(3)-alpha-GalNAc,IV(2)-alpha-Fuc-nLc4Cer(d18:1(4E)) + H2O = a neolactoside IV(2)-alpha-Fuc-nLc4Cer(d18:1(4E)) + N-acetyl-alpha-D-galactosamine. The catalysed reaction is a neolactoside IV(3)-alpha-GalNAc,IV(2)-alpha-Fuc-nLc4Cer(d18:0) + H2O = a neolactoside IV(2)-alpha-Fuc-nLc4Cer(d18:0) + N-acetyl-alpha-D-galactosamine. It carries out the reaction a globoside IV3GalNAc-Gb4Cer + H2O = N-acetyl-alpha-D-galactosamine + a globoside Gb4Cer. Functionally, removes terminal alpha-N-acetylgalactosamine residues from glycolipids and glycopeptides. Required for the breakdown of glycolipids. The chain is Alpha-N-acetylgalactosaminidase (Naga) from Mus musculus (Mouse).